Here is a 251-residue protein sequence, read N- to C-terminus: Cytochrome c oxidase subunit 2 (251 aa).

Positions 1–15 are cleaved as a propeptide — removed in mature form; that stretch reads MLDLLRLQLTTFIMN. Topologically, residues 16 to 30 are mitochondrial intermembrane; that stretch reads DVPTPYACYFQDSAT. Residues 31–64 traverse the membrane as a helical segment; that stretch reads PNQEGILELHDNIMFYLLVILGLVSWMLYTIVMT. The Mitochondrial matrix segment spans residues 65–78; sequence YSKNPIAYKYIKHG. A helical membrane pass occupies residues 79–108; sequence QTIEVIWTIFPAVILLIIAFPSFILLYLCD. The Mitochondrial intermembrane segment spans residues 109-251; it reads EVISPAMTIK…PKFLEWLNEQ (143 aa). Cu cation contacts are provided by histidine 186, cysteine 221, glutamate 223, cysteine 225, histidine 229, and methionine 232. Glutamate 223 is a Mg(2+) binding site.

This sequence belongs to the cytochrome c oxidase subunit 2 family. In terms of assembly, component of the cytochrome c oxidase (complex IV, CIV), a multisubunit enzyme composed of 12 subunits. The complex is composed of a catalytic core of 3 subunits COX1, COX2 and COX3, encoded in the mitochondrial DNA, and 9 supernumerary subunits COX4, COX5A (or COX5B), COX6, COX7, COX8, COX9, COX12, COX13 and COX26, which are encoded in the nuclear genome. The complex exists as a monomer or a dimer and forms supercomplexes (SCs) in the inner mitochondrial membrane with a dimer of ubiquinol-cytochrome c oxidoreductase (cytochrome b-c1 complex, complex III, CIII), resulting in 2 different assemblies (supercomplexes III(2)IV and III(2)IV(2)). Requires Cu cation as cofactor. The N-terminal sequence of COX2 is processed by IMP1.

It localises to the mitochondrion inner membrane. It catalyses the reaction 4 Fe(II)-[cytochrome c] + O2 + 8 H(+)(in) = 4 Fe(III)-[cytochrome c] + 2 H2O + 4 H(+)(out). Its function is as follows. Component of the cytochrome c oxidase, the last enzyme in the mitochondrial electron transport chain which drives oxidative phosphorylation. The respiratory chain contains 3 multisubunit complexes succinate dehydrogenase (complex II, CII), ubiquinol-cytochrome c oxidoreductase (cytochrome b-c1 complex, complex III, CIII) and cytochrome c oxidase (complex IV, CIV), that cooperate to transfer electrons derived from NADH and succinate to molecular oxygen, creating an electrochemical gradient over the inner membrane that drives transmembrane transport and the ATP synthase. Cytochrome c oxidase is the component of the respiratory chain that catalyzes the reduction of oxygen to water. Electrons originating from reduced cytochrome c in the intermembrane space (IMS) are transferred via the dinuclear copper A center (CU(A)) of COX2 and heme A of COX1 to the active site in COX1, a binuclear center (BNC) formed by heme A3 and copper B (CU(B)). The BNC reduces molecular oxygen to 2 water molecules unsing 4 electrons from cytochrome c in the IMS and 4 protons from the mitochondrial matrix. COX2 is a catalytic core subunit which transfers the electrons from cytochrome c via its dinuclear copper A center (CU(A)) to the BNC of the COX1. The polypeptide is Cytochrome c oxidase subunit 2 (COX2) (Saccharomyces cerevisiae (strain ATCC 204508 / S288c) (Baker's yeast)).